The primary structure comprises 488 residues: Glutamyl-tRNA(Gln) amidotransferase subunit A (488 aa).

Active-site charge relay system residues include K77 and S152. The active-site Acyl-ester intermediate is the S176.

This sequence belongs to the amidase family. GatA subfamily. As to quaternary structure, heterotrimer of A, B and C subunits.

It catalyses the reaction L-glutamyl-tRNA(Gln) + L-glutamine + ATP + H2O = L-glutaminyl-tRNA(Gln) + L-glutamate + ADP + phosphate + H(+). Allows the formation of correctly charged Gln-tRNA(Gln) through the transamidation of misacylated Glu-tRNA(Gln) in organisms which lack glutaminyl-tRNA synthetase. The reaction takes place in the presence of glutamine and ATP through an activated gamma-phospho-Glu-tRNA(Gln). In Streptococcus pyogenes serotype M28 (strain MGAS6180), this protein is Glutamyl-tRNA(Gln) amidotransferase subunit A.